A 207-amino-acid chain; its full sequence is Guanylate kinase (207 aa).

Residues 4–184 form the Guanylate kinase-like domain; it reads GTLYIVSAPS…ALSDLKTIIR (181 aa). 11–18 contacts ATP; sequence APSGAGKS.

The protein belongs to the guanylate kinase family.

The protein localises to the cytoplasm. It catalyses the reaction GMP + ATP = GDP + ADP. The catalysed reaction is dZMP + ATP = dZDP + ADP. It participates in purine metabolism. In terms of biological role, essential for recycling GMP and indirectly, cGMP. Functionally, (Microbial infection) Catalyzes the phosphorylation of dZMP to dZDP, when the bacterium is infected by a phage that produces the substrate for the synthesis of dZTP (2- amino-2'-deoxyadenosine 5'-triphosphate), which is then used by the phage as a DNA polymerase substrate. This Salmonella choleraesuis (strain SC-B67) protein is Guanylate kinase.